Here is a 252-residue protein sequence, read N- to C-terminus: Triosephosphate isomerase (252 aa).

9–11 (NWK) serves as a coordination point for substrate. The Electrophile role is filled by histidine 96. The active-site Proton acceptor is glutamate 166. Substrate contacts are provided by residues glycine 172, serine 212, and 233–234 (GG).

The protein belongs to the triosephosphate isomerase family. Homodimer.

The protein resides in the cytoplasm. The catalysed reaction is D-glyceraldehyde 3-phosphate = dihydroxyacetone phosphate. It functions in the pathway carbohydrate biosynthesis; gluconeogenesis. The protein operates within carbohydrate degradation; glycolysis; D-glyceraldehyde 3-phosphate from glycerone phosphate: step 1/1. Its function is as follows. Involved in the gluconeogenesis. Catalyzes stereospecifically the conversion of dihydroxyacetone phosphate (DHAP) to D-glyceraldehyde-3-phosphate (G3P). In Chlorobium chlorochromatii (strain CaD3), this protein is Triosephosphate isomerase.